Reading from the N-terminus, the 354-residue chain is NADH-quinone oxidoreductase subunit H (354 aa).

A run of 8 helical transmembrane segments spans residues I22–L42, Y91–F111, L124–A144, M168–V188, V203–V223, L255–F275, I291–I311, and L326–I346.

This sequence belongs to the complex I subunit 1 family. As to quaternary structure, NDH-1 is composed of 14 different subunits. Subunits NuoA, H, J, K, L, M, N constitute the membrane sector of the complex.

Its subcellular location is the cell inner membrane. It carries out the reaction a quinone + NADH + 5 H(+)(in) = a quinol + NAD(+) + 4 H(+)(out). In terms of biological role, NDH-1 shuttles electrons from NADH, via FMN and iron-sulfur (Fe-S) centers, to quinones in the respiratory chain. The immediate electron acceptor for the enzyme in this species is believed to be ubiquinone. Couples the redox reaction to proton translocation (for every two electrons transferred, four hydrogen ions are translocated across the cytoplasmic membrane), and thus conserves the redox energy in a proton gradient. This subunit may bind ubiquinone. In Cupriavidus pinatubonensis (strain JMP 134 / LMG 1197) (Cupriavidus necator (strain JMP 134)), this protein is NADH-quinone oxidoreductase subunit H.